The chain runs to 220 residues: UPF0502 protein PSPPH_2577 (220 aa).

It belongs to the UPF0502 family.

This is UPF0502 protein PSPPH_2577 from Pseudomonas savastanoi pv. phaseolicola (strain 1448A / Race 6) (Pseudomonas syringae pv. phaseolicola (strain 1448A / Race 6)).